A 122-amino-acid chain; its full sequence is Large ribosomal subunit protein bL19 (122 aa).

This sequence belongs to the bacterial ribosomal protein bL19 family.

Its function is as follows. This protein is located at the 30S-50S ribosomal subunit interface and may play a role in the structure and function of the aminoacyl-tRNA binding site. The sequence is that of Large ribosomal subunit protein bL19 from Novosphingobium aromaticivorans (strain ATCC 700278 / DSM 12444 / CCUG 56034 / CIP 105152 / NBRC 16084 / F199).